The sequence spans 484 residues: NADH-ubiquinone oxidoreductase chain 4 (484 aa).

A run of 14 helical transmembrane segments spans residues 1–21, 33–53, 77–97, 109–129, 130–150, 162–182, 206–226, 236–256, 270–290, 295–315, 326–346, 365–385, 405–425, and 448–468; these read MLTLLLIIPLVGALMLAPMQG, LALGTSLINFVLSIVLWGEFD, VDGISLYFVLLTTFITPICIL, YFLMCFLVLETLLIAVFVVLD, ILLFYVFFESVLIPLFLIVGI, FLLFLYTLFGSLFMLLAFLVI, LLWLAVFISMAIKTPLLPFHV, PLAGSVILAGLILKLATYGYM, FSPLVQTIAVITLIYASLATL, FKALVAYSSIGHMAVVVLGLF, LLLSIAHGVVSPALFILVGGV, YMPLFSIMFFVFTIFNAAVPL, VFAVLGSTGIVLSAAYSIWLY, and FMLLLPLLFVAVVFGIFPNII.

The protein belongs to the complex I subunit 4 family.

It is found in the mitochondrion inner membrane. The enzyme catalyses a ubiquinone + NADH + 5 H(+)(in) = a ubiquinol + NAD(+) + 4 H(+)(out). Core subunit of the mitochondrial membrane respiratory chain NADH dehydrogenase (Complex I) that is believed to belong to the minimal assembly required for catalysis. Complex I functions in the transfer of electrons from NADH to the respiratory chain. The immediate electron acceptor for the enzyme is believed to be ubiquinone. This Mycosarcoma maydis (Corn smut fungus) protein is NADH-ubiquinone oxidoreductase chain 4 (ND4).